The following is a 311-amino-acid chain: Homoserine kinase (311 aa).

88–98 provides a ligand contact to ATP; it reads PEGLGLGSSGA.

It belongs to the GHMP kinase family. Homoserine kinase subfamily.

Its subcellular location is the cytoplasm. It catalyses the reaction L-homoserine + ATP = O-phospho-L-homoserine + ADP + H(+). The protein operates within amino-acid biosynthesis; L-threonine biosynthesis; L-threonine from L-aspartate: step 4/5. Functionally, catalyzes the ATP-dependent phosphorylation of L-homoserine to L-homoserine phosphate. The protein is Homoserine kinase of Saccharolobus islandicus (strain L.S.2.15 / Lassen #1) (Sulfolobus islandicus).